Consider the following 275-residue polypeptide: 4-diphosphocytidyl-2-C-methyl-D-erythritol kinase (275 aa).

Residue Lys14 is part of the active site. 98-108 contacts ATP; sequence PMGAGLGGGSS. Asp140 is an active-site residue.

This sequence belongs to the GHMP kinase family. IspE subfamily.

It catalyses the reaction 4-CDP-2-C-methyl-D-erythritol + ATP = 4-CDP-2-C-methyl-D-erythritol 2-phosphate + ADP + H(+). Its pathway is isoprenoid biosynthesis; isopentenyl diphosphate biosynthesis via DXP pathway; isopentenyl diphosphate from 1-deoxy-D-xylulose 5-phosphate: step 3/6. Its function is as follows. Catalyzes the phosphorylation of the position 2 hydroxy group of 4-diphosphocytidyl-2C-methyl-D-erythritol. This is 4-diphosphocytidyl-2-C-methyl-D-erythritol kinase from Francisella tularensis subsp. novicida (strain U112).